Consider the following 102-residue polypeptide: Putative septation protein SpoVG 1 (102 aa).

This sequence belongs to the SpoVG family.

Could be involved in septation. The polypeptide is Putative septation protein SpoVG 1 (Listeria innocua serovar 6a (strain ATCC BAA-680 / CLIP 11262)).